A 280-amino-acid polypeptide reads, in one-letter code: ATP synthase gamma chain (280 aa).

The protein belongs to the ATPase gamma chain family. In terms of assembly, F-type ATPases have 2 components, CF(1) - the catalytic core - and CF(0) - the membrane proton channel. CF(1) has five subunits: alpha(3), beta(3), gamma(1), delta(1), epsilon(1). CF(0) has three main subunits: a, b and c.

It is found in the cell membrane. In terms of biological role, produces ATP from ADP in the presence of a proton gradient across the membrane. The gamma chain is believed to be important in regulating ATPase activity and the flow of protons through the CF(0) complex. In Mycoplasma capricolum subsp. capricolum (strain California kid / ATCC 27343 / NCTC 10154), this protein is ATP synthase gamma chain.